The sequence spans 316 residues: Transaldolase (316 aa).

Catalysis depends on K132, which acts as the Schiff-base intermediate with substrate.

Belongs to the transaldolase family. Type 1 subfamily. Homodimer.

It localises to the cytoplasm. It carries out the reaction D-sedoheptulose 7-phosphate + D-glyceraldehyde 3-phosphate = D-erythrose 4-phosphate + beta-D-fructose 6-phosphate. It functions in the pathway carbohydrate degradation; pentose phosphate pathway; D-glyceraldehyde 3-phosphate and beta-D-fructose 6-phosphate from D-ribose 5-phosphate and D-xylulose 5-phosphate (non-oxidative stage): step 2/3. In terms of biological role, transaldolase is important for the balance of metabolites in the pentose-phosphate pathway. The protein is Transaldolase of Aliivibrio salmonicida (strain LFI1238) (Vibrio salmonicida (strain LFI1238)).